The primary structure comprises 592 residues: Syntaxin-binding protein 3 (592 aa).

The interval 1–255 is mediates interaction with DOC2B; that stretch reads MAPPVAERGL…STVLHELTFQ (255 aa).

The protein belongs to the STXBP/unc-18/SEC1 family. As to quaternary structure, interacts with DOC2B; the interaction is direct, occurs at the cell membrane, excludes interaction with STX4 and regulates glucose-stimulated insulin secretion. Interacts with STX4. In terms of processing, phosphorylated by PKC in platelets in response to thrombin stimulation; phosphorylation inhibits binding to STX4. As to expression, megakaryocytes and platelets.

It is found in the cytoplasm. Its subcellular location is the cytosol. The protein localises to the cell membrane. Its function is as follows. Together with STX4 and VAMP2, may play a role in insulin-dependent movement of GLUT4 and in docking/fusion of intracellular GLUT4-containing vesicles with the cell surface in adipocytes. The protein is Syntaxin-binding protein 3 (STXBP3) of Homo sapiens (Human).